Reading from the N-terminus, the 310-residue chain is Porphobilinogen deaminase (310 aa).

Residue Cys-242 is modified to S-(dipyrrolylmethanemethyl)cysteine.

This sequence belongs to the HMBS family. As to quaternary structure, monomer. Dipyrromethane is required as a cofactor.

It carries out the reaction 4 porphobilinogen + H2O = hydroxymethylbilane + 4 NH4(+). The protein operates within porphyrin-containing compound metabolism; protoporphyrin-IX biosynthesis; coproporphyrinogen-III from 5-aminolevulinate: step 2/4. Tetrapolymerization of the monopyrrole PBG into the hydroxymethylbilane pre-uroporphyrinogen in several discrete steps. The polypeptide is Porphobilinogen deaminase (Shewanella pealeana (strain ATCC 700345 / ANG-SQ1)).